The primary structure comprises 509 residues: 3-isopropylmalate dehydratase large subunit, chloroplastic (509 aa).

The span at 1 to 24 (MASVISSSPFLCKSSSKSDLGISS) shows a compositional bias: low complexity. Positions 1–25 (MASVISSSPFLCKSSSKSDLGISSF) are disordered. The transit peptide at 1 to 47 (MASVISSSPFLCKSSSKSDLGISSFPKSSQISIHRCQKKSISRKIVS) directs the protein to the chloroplast. [4Fe-4S] cluster-binding residues include cysteine 376, cysteine 445, and cysteine 448.

It belongs to the aconitase/IPM isomerase family. As to quaternary structure, heterodimer of the large LEUC/IIL1 subunit and the small LEUD (SSU1, SSU2 or SSU3) subunits. Requires [4Fe-4S] cluster as cofactor. As to expression, expressed in roots, leaves, stems and flowers. Expressed at low levels in siliques.

It localises to the plastid. It is found in the chloroplast stroma. The catalysed reaction is (2R,3S)-3-isopropylmalate = (2S)-2-isopropylmalate. It carries out the reaction a 2-(omega-methylsulfanyl)alkylmalate = a 2-(omega-methylsulfanyl)alkylmaleate + H2O. The enzyme catalyses 2-(3-methylsulfanyl)propylmalate = 2-(2-methylsulfanyl)propylmaleate + H2O. It catalyses the reaction a 3-(omega-methylsulfanyl)alkylmalate = a 2-(omega-methylsulfanyl)alkylmaleate + H2O. The catalysed reaction is 2-(2-methylsulfanyl)ethylmalate = 2-(2-methylsulfanyl)ethylmaleate + H2O. It carries out the reaction 3-(2-methylsulfanyl)ethylmalate = 2-(2-methylsulfanyl)ethylmaleate + H2O. The enzyme catalyses 3-(3-methylsulfanyl)propylmalate = 2-(2-methylsulfanyl)propylmaleate + H2O. The protein operates within amino-acid biosynthesis; L-leucine biosynthesis; L-leucine from 3-methyl-2-oxobutanoate: step 2/4. In terms of biological role, catalyzes the isomerization between 2-isopropylmalate and 3-isopropylmalate, via the formation of 2-isopropylmaleate. Functions in both the biosynthesis of leucine and in the methionine chain elongation pathway of aliphatic glucosinolate formation. This chain is 3-isopropylmalate dehydratase large subunit, chloroplastic, found in Arabidopsis thaliana (Mouse-ear cress).